Here is a 387-residue protein sequence, read N- to C-terminus: MTKKKKLTHGQVRRVRNNQHKKLKQEESIVWDEALLGSAQPGLVITRFGQHADIEDPVTGEIHRCNLRRGIESLVSGDNVLWRPGAETLAGISGVVEAVEARSSVLVRPDYYDGLKPVAANVDQMVIVSSVLPELSLNIIDRYLIASETLGIAPLIVLNKIDLLSPELREQYSTWLNDYRAIGYDVLYVSKKTGEGIADLEVKLRDRTNVFVGQSGVGKSSLVNALLPELEEDVEEGAISETSGLGQHTTTAARLYHIPSGGDLIDSPGVREFGLWHLETDDVTKAYVEFRPYLGGCKFRDCKHGDDPGCLLREAVSKGEISALRFDNYHRIVQSMTENKANRQYSRSKKPICKSKLLASLEHLLTEGAIFSNISRPSPLYWNVNHG.

The CP-type G domain occupies Y112–F273. Residues N159–D162 and G213–S221 each bind GTP. Residues C297, C302, H304, and C310 each contribute to the Zn(2+) site.

Belongs to the TRAFAC class YlqF/YawG GTPase family. RsgA subfamily. As to quaternary structure, monomer. Associates with 30S ribosomal subunit, binds 16S rRNA. Zn(2+) serves as cofactor.

Its subcellular location is the cytoplasm. One of several proteins that assist in the late maturation steps of the functional core of the 30S ribosomal subunit. Helps release RbfA from mature subunits. May play a role in the assembly of ribosomal proteins into the subunit. Circularly permuted GTPase that catalyzes slow GTP hydrolysis, GTPase activity is stimulated by the 30S ribosomal subunit. The protein is Small ribosomal subunit biogenesis GTPase RsgA of Vibrio cholerae serotype O1 (strain ATCC 39315 / El Tor Inaba N16961).